A 192-amino-acid polypeptide reads, in one-letter code: uncharacterized protein (192 aa).

One can recognise a Nudix hydrolase domain in the interval 29 to 160 (HRQAAVLIPI…PLDIYRRGDS (132 aa)). The short motif at 67–89 (GAVDDTDASAIAAALREAEEEVA) is the Nudix box element. 2 residues coordinate Mg(2+): Glu83 and Glu87.

The protein belongs to the Nudix hydrolase family. PCD1 subfamily. The cofactor is Mn(2+). Mg(2+) is required as a cofactor.

Its function is as follows. Probably mediates the hydrolysis of some nucleoside diphosphate derivatives. This is an uncharacterized protein from Escherichia coli (strain K12).